Reading from the N-terminus, the 97-residue chain is Putative defensin-like protein 240 (97 aa).

The N-terminal stretch at 1–23 is a signal peptide; it reads MRYTTSFIVFCFYIFLFTNLVQG. 4 disulfides stabilise this stretch: Cys29-Cys88, Cys39-Cys69, Cys47-Cys85, and Cys67-Cys87.

Belongs to the DEFL family.

Its subcellular location is the secreted. The sequence is that of Putative defensin-like protein 240 (SCRL18) from Arabidopsis thaliana (Mouse-ear cress).